Consider the following 134-residue polypeptide: Large ribosomal subunit protein uL18 (134 aa).

It belongs to the universal ribosomal protein uL18 family. Part of the 50S ribosomal subunit; part of the 5S rRNA/L5/L18/L25 subcomplex. Contacts the 5S and 23S rRNAs.

This is one of the proteins that bind and probably mediate the attachment of the 5S RNA into the large ribosomal subunit, where it forms part of the central protuberance. The sequence is that of Large ribosomal subunit protein uL18 from Corynebacterium efficiens (strain DSM 44549 / YS-314 / AJ 12310 / JCM 11189 / NBRC 100395).